A 268-amino-acid polypeptide reads, in one-letter code: Glutamate racemase (268 aa).

Substrate is bound by residues 9-10 (DS) and 41-42 (YG). The active-site Proton donor/acceptor is Cys-73. Position 74–75 (74–75 (NS)) interacts with substrate. The Proton donor/acceptor role is filled by Cys-183. 184-185 (TH) provides a ligand contact to substrate.

This sequence belongs to the aspartate/glutamate racemases family.

The enzyme catalyses L-glutamate = D-glutamate. It functions in the pathway cell wall biogenesis; peptidoglycan biosynthesis. Provides the (R)-glutamate required for cell wall biosynthesis. The chain is Glutamate racemase from Shewanella pealeana (strain ATCC 700345 / ANG-SQ1).